The chain runs to 413 residues: Protein trichome birefringence-like 9 (413 aa).

The chain crosses the membrane as a helical; Signal-anchor for type II membrane protein span at residues 22-42 (LFVSLFLLSLLIFSTVVVDVM). The short motif at 141-143 (GDS) is the GDS motif element. The short motif at 384–398 (DCSHWCLPGVPDTWN) is the DCXHWCLPGXXDXWN motif element.

It belongs to the PC-esterase family. TBL subfamily.

It is found in the membrane. In terms of biological role, may act as a bridging protein that binds pectin and other cell wall polysaccharides. Probably involved in maintaining esterification of pectins. May be involved in the specific O-acetylation of cell wall polymers. The protein is Protein trichome birefringence-like 9 (TBL9) of Arabidopsis thaliana (Mouse-ear cress).